A 675-amino-acid chain; its full sequence is tRNA 5-methylaminomethyl-2-thiouridine biosynthesis bifunctional protein MnmC (675 aa).

Residues 1–245 (MANLPIQHAS…KREMLSGLLP (245 aa)) form a tRNA (mnm(5)s(2)U34)-methyltransferase region. Positions 271–675 (IGGGIASVLT…LLKGKPVTHD (405 aa)) are FAD-dependent cmnm(5)s(2)U34 oxidoreductase.

This sequence in the N-terminal section; belongs to the methyltransferase superfamily. tRNA (mnm(5)s(2)U34)-methyltransferase family. The protein in the C-terminal section; belongs to the DAO family. Requires FAD as cofactor.

Its subcellular location is the cytoplasm. It carries out the reaction 5-aminomethyl-2-thiouridine(34) in tRNA + S-adenosyl-L-methionine = 5-methylaminomethyl-2-thiouridine(34) in tRNA + S-adenosyl-L-homocysteine + H(+). Catalyzes the last two steps in the biosynthesis of 5-methylaminomethyl-2-thiouridine (mnm(5)s(2)U) at the wobble position (U34) in tRNA. Catalyzes the FAD-dependent demodification of cmnm(5)s(2)U34 to nm(5)s(2)U34, followed by the transfer of a methyl group from S-adenosyl-L-methionine to nm(5)s(2)U34, to form mnm(5)s(2)U34. This is tRNA 5-methylaminomethyl-2-thiouridine biosynthesis bifunctional protein MnmC from Pectobacterium atrosepticum (strain SCRI 1043 / ATCC BAA-672) (Erwinia carotovora subsp. atroseptica).